Here is a 450-residue protein sequence, read N- to C-terminus: ATP-dependent protease ATPase subunit HslU (450 aa).

ATP contacts are provided by residues V29, 71 to 76 (GVGKTE), D261, E328, and R400.

Belongs to the ClpX chaperone family. HslU subfamily. A double ring-shaped homohexamer of HslV is capped on each side by a ring-shaped HslU homohexamer. The assembly of the HslU/HslV complex is dependent on binding of ATP.

The protein localises to the cytoplasm. Its function is as follows. ATPase subunit of a proteasome-like degradation complex; this subunit has chaperone activity. The binding of ATP and its subsequent hydrolysis by HslU are essential for unfolding of protein substrates subsequently hydrolyzed by HslV. HslU recognizes the N-terminal part of its protein substrates and unfolds these before they are guided to HslV for hydrolysis. This is ATP-dependent protease ATPase subunit HslU from Rickettsia canadensis (strain McKiel).